Consider the following 110-residue polypeptide: ATP-dependent Clp protease adapter protein ClpS 2 (110 aa).

The interval 1–24 (MSNDENRSGSPTGPNTSVITKVKP) is disordered. A compositionally biased stretch (polar residues) spans 8-19 (SGSPTGPNTSVI).

The protein belongs to the ClpS family. In terms of assembly, binds to the N-terminal domain of the chaperone ClpA.

Involved in the modulation of the specificity of the ClpAP-mediated ATP-dependent protein degradation. This chain is ATP-dependent Clp protease adapter protein ClpS 2, found in Bradyrhizobium diazoefficiens (strain JCM 10833 / BCRC 13528 / IAM 13628 / NBRC 14792 / USDA 110).